Here is a 456-residue protein sequence, read N- to C-terminus: Bifunctional protein GlmU (456 aa).

The pyrophosphorylase stretch occupies residues 1 to 229; sequence MTKKALSAVI…VMEVEGANNR (229 aa). Residues 11 to 14, lysine 25, glutamine 76, 81 to 82, 103 to 105, glycine 140, glutamate 154, asparagine 169, and asparagine 227 each bind UDP-N-acetyl-alpha-D-glucosamine; these read LAAG, GT, and YGD. Aspartate 105 is a binding site for Mg(2+). Mg(2+) is bound at residue asparagine 227. The tract at residues 230-250 is linker; that stretch reads LQLAALERYFQNKQASKLLLE. The tract at residues 251-456 is N-acetyltransferase; sequence GVMIYDPARF…QGWQRPIKKK (206 aa). 2 residues coordinate UDP-N-acetyl-alpha-D-glucosamine: arginine 333 and lysine 351. The Proton acceptor role is filled by histidine 363. UDP-N-acetyl-alpha-D-glucosamine-binding residues include tyrosine 366 and asparagine 377. Residues alanine 380, 386–387, serine 405, alanine 423, and arginine 440 contribute to the acetyl-CoA site; that span reads NY.

It in the N-terminal section; belongs to the N-acetylglucosamine-1-phosphate uridyltransferase family. In the C-terminal section; belongs to the transferase hexapeptide repeat family. As to quaternary structure, homotrimer. It depends on Mg(2+) as a cofactor.

The protein localises to the cytoplasm. The catalysed reaction is alpha-D-glucosamine 1-phosphate + acetyl-CoA = N-acetyl-alpha-D-glucosamine 1-phosphate + CoA + H(+). It catalyses the reaction N-acetyl-alpha-D-glucosamine 1-phosphate + UTP + H(+) = UDP-N-acetyl-alpha-D-glucosamine + diphosphate. It participates in nucleotide-sugar biosynthesis; UDP-N-acetyl-alpha-D-glucosamine biosynthesis; N-acetyl-alpha-D-glucosamine 1-phosphate from alpha-D-glucosamine 6-phosphate (route II): step 2/2. Its pathway is nucleotide-sugar biosynthesis; UDP-N-acetyl-alpha-D-glucosamine biosynthesis; UDP-N-acetyl-alpha-D-glucosamine from N-acetyl-alpha-D-glucosamine 1-phosphate: step 1/1. The protein operates within bacterial outer membrane biogenesis; LPS lipid A biosynthesis. In terms of biological role, catalyzes the last two sequential reactions in the de novo biosynthetic pathway for UDP-N-acetylglucosamine (UDP-GlcNAc). The C-terminal domain catalyzes the transfer of acetyl group from acetyl coenzyme A to glucosamine-1-phosphate (GlcN-1-P) to produce N-acetylglucosamine-1-phosphate (GlcNAc-1-P), which is converted into UDP-GlcNAc by the transfer of uridine 5-monophosphate (from uridine 5-triphosphate), a reaction catalyzed by the N-terminal domain. In Haemophilus influenzae (strain 86-028NP), this protein is Bifunctional protein GlmU.